The sequence spans 79 residues: Acyl carrier protein 2 (79 aa).

Positions 2-77 (DDIETRVRKL…QAIDYLEEAV (76 aa)) constitute a Carrier domain. The residue at position 37 (serine 37) is an O-(pantetheine 4'-phosphoryl)serine.

This sequence belongs to the acyl carrier protein (ACP) family. Post-translationally, 4'-phosphopantetheine is transferred from CoA to a specific serine of apo-ACP by AcpS. This modification is essential for activity because fatty acids are bound in thioester linkage to the sulfhydryl of the prosthetic group.

It is found in the cytoplasm. Its pathway is lipid metabolism; fatty acid biosynthesis. In terms of biological role, carrier of the growing fatty acid chain in fatty acid biosynthesis. This chain is Acyl carrier protein 2, found in Pseudomonas aeruginosa (strain ATCC 15692 / DSM 22644 / CIP 104116 / JCM 14847 / LMG 12228 / 1C / PRS 101 / PAO1).